A 639-amino-acid chain; its full sequence is Signal recognition particle receptor subunit alpha (639 aa).

The interval 132-317 (APTTMKKFED…STKPSATKGT (186 aa)) is disordered. Basic and acidic residues-rich tracts occupy residues 137 to 146 (KKFEDSEKAK) and 153 to 165 (IETRGEKPKEKAK). Position 178 is a phosphoserine (serine 178). The span at 204–240 (ELSKEEQIRRKREEFIQKHGRGMEKSSKSSKSDAPKE) shows a compositional bias: basic and acidic residues. Residue threonine 285 is modified to Phosphothreonine. Serine 297, serine 298, and serine 299 each carry phosphoserine. The segment covering 305–315 (AQNSTKPSATK) has biased composition (polar residues). Residues 420–637 (YVVTFCGVNG…NAKAVVAALM (218 aa)) form an NG domain region. Residue 426–433 (GVNGVGKS) participates in GTP binding. Residue serine 474 is modified to Phosphoserine. 521–525 (DTAGR) provides a ligand contact to GTP. At threonine 579 the chain carries Phosphothreonine. A GTP-binding site is contributed by 589-592 (TKFD).

Belongs to the GTP-binding SRP family. Heterodimer with SRPRB. Interacts with the signal recognition particle (SRP) complex subunit SRP54.

The protein resides in the endoplasmic reticulum membrane. In terms of biological role, component of the SRP (signal recognition particle) receptor. Ensures, in conjunction with the signal recognition particle, the correct targeting of the nascent secretory proteins to the endoplasmic reticulum membrane system. Forms a guanosine 5'-triphosphate (GTP)-dependent complex with the SRP subunit SRP54. SRP receptor compaction and GTPase rearrangement drive SRP-mediated cotranslational protein translocation into the ER. In Bos taurus (Bovine), this protein is Signal recognition particle receptor subunit alpha.